A 333-amino-acid chain; its full sequence is Glycerol-3-phosphate dehydrogenase [NAD(P)+] (333 aa).

NADPH contacts are provided by Trp-12, His-31, and Lys-105. Positions 105, 134, and 136 each coordinate sn-glycerol 3-phosphate. An NADPH-binding site is contributed by Ala-138. Residues Lys-189, Asp-242, Ser-252, Arg-253, and Asn-254 each coordinate sn-glycerol 3-phosphate. The active-site Proton acceptor is the Lys-189. An NADPH-binding site is contributed by Arg-253. NADPH-binding residues include Val-278 and Glu-280.

It belongs to the NAD-dependent glycerol-3-phosphate dehydrogenase family.

Its subcellular location is the cytoplasm. It carries out the reaction sn-glycerol 3-phosphate + NAD(+) = dihydroxyacetone phosphate + NADH + H(+). The catalysed reaction is sn-glycerol 3-phosphate + NADP(+) = dihydroxyacetone phosphate + NADPH + H(+). Its pathway is membrane lipid metabolism; glycerophospholipid metabolism. Catalyzes the reduction of the glycolytic intermediate dihydroxyacetone phosphate (DHAP) to sn-glycerol 3-phosphate (G3P), the key precursor for phospholipid synthesis. This is Glycerol-3-phosphate dehydrogenase [NAD(P)+] from Brachyspira hyodysenteriae (strain ATCC 49526 / WA1).